A 119-amino-acid chain; its full sequence is Large ribosomal subunit protein uL18 (119 aa).

This sequence belongs to the universal ribosomal protein uL18 family. As to quaternary structure, part of the 50S ribosomal subunit; part of the 5S rRNA/L5/L18/L25 subcomplex. Contacts the 5S and 23S rRNAs.

Its function is as follows. This is one of the proteins that bind and probably mediate the attachment of the 5S RNA into the large ribosomal subunit, where it forms part of the central protuberance. This chain is Large ribosomal subunit protein uL18, found in Micrococcus luteus (Micrococcus lysodeikticus).